The primary structure comprises 237 residues: MRPSKRAADAMRDVTLERAVARYAEGSCLVTFGNTRVLCTASLEERGPPWLRGSGKGWVTAEYAMLPRATHERTRREVNSGKPSGRTQEIQRLIGRSLRAVTNLPALGERQITVDCDVIQADGGTRTASITGAWVALHDCFAWMRARSIISVDPLKDHVAAVSCGIYKGQPVLDLDYAEDSAAETDANFVVTGKGGIVEVQGTAEMEPFSEAQFIELLALAKGGIANLVELQRKAIA.

Phosphate contacts are provided by residues arginine 86 and 124–126; that span reads GTR.

This sequence belongs to the RNase PH family. Homohexameric ring arranged as a trimer of dimers.

It carries out the reaction tRNA(n+1) + phosphate = tRNA(n) + a ribonucleoside 5'-diphosphate. Its function is as follows. Phosphorolytic 3'-5' exoribonuclease that plays an important role in tRNA 3'-end maturation. Removes nucleotide residues following the 3'-CCA terminus of tRNAs; can also add nucleotides to the ends of RNA molecules by using nucleoside diphosphates as substrates, but this may not be physiologically important. Probably plays a role in initiation of 16S rRNA degradation (leading to ribosome degradation) during starvation. This is Ribonuclease PH from Methylorubrum populi (strain ATCC BAA-705 / NCIMB 13946 / BJ001) (Methylobacterium populi).